We begin with the raw amino-acid sequence, 83 residues long: MSIENLLSSVSLDTLLVIGGYVALGGLYLVVMPLLLFFWMNWRWHVMGKIERFSVYGLVFFFFPGMIVFAPFLNLRLSGQGEV.

2 helical membrane passes run 18–38 and 53–73; these read IGGYVALGGLYLVVMPLLLFF and FSVYGLVFFFFPGMIVFAPFL.

The protein belongs to the complex I NdhL subunit family. As to quaternary structure, NDH-1 can be composed of about 15 different subunits; different subcomplexes with different compositions have been identified which probably have different functions.

The protein localises to the cellular thylakoid membrane. It carries out the reaction a plastoquinone + NADH + (n+1) H(+)(in) = a plastoquinol + NAD(+) + n H(+)(out). It catalyses the reaction a plastoquinone + NADPH + (n+1) H(+)(in) = a plastoquinol + NADP(+) + n H(+)(out). NDH-1 shuttles electrons from an unknown electron donor, via FMN and iron-sulfur (Fe-S) centers, to quinones in the respiratory and/or the photosynthetic chain. The immediate electron acceptor for the enzyme in this species is believed to be plastoquinone. Couples the redox reaction to proton translocation, and thus conserves the redox energy in a proton gradient. Cyanobacterial NDH-1 also plays a role in inorganic carbon-concentration. In Synechococcus sp. (strain CC9311), this protein is NAD(P)H-quinone oxidoreductase subunit L.